Here is a 102-residue protein sequence, read N- to C-terminus: Aspartyl/glutamyl-tRNA(Asn/Gln) amidotransferase subunit C (102 aa).

It belongs to the GatC family. As to quaternary structure, heterotrimer of A, B and C subunits.

It catalyses the reaction L-glutamyl-tRNA(Gln) + L-glutamine + ATP + H2O = L-glutaminyl-tRNA(Gln) + L-glutamate + ADP + phosphate + H(+). The catalysed reaction is L-aspartyl-tRNA(Asn) + L-glutamine + ATP + H2O = L-asparaginyl-tRNA(Asn) + L-glutamate + ADP + phosphate + 2 H(+). Functionally, allows the formation of correctly charged Asn-tRNA(Asn) or Gln-tRNA(Gln) through the transamidation of misacylated Asp-tRNA(Asn) or Glu-tRNA(Gln) in organisms which lack either or both of asparaginyl-tRNA or glutaminyl-tRNA synthetases. The reaction takes place in the presence of glutamine and ATP through an activated phospho-Asp-tRNA(Asn) or phospho-Glu-tRNA(Gln). This is Aspartyl/glutamyl-tRNA(Asn/Gln) amidotransferase subunit C from Mycobacteroides abscessus (strain ATCC 19977 / DSM 44196 / CCUG 20993 / CIP 104536 / JCM 13569 / NCTC 13031 / TMC 1543 / L948) (Mycobacterium abscessus).